The chain runs to 140 residues: Nucleoside diphosphate kinase (140 aa).

Positions 11, 59, 87, 93, 104, and 114 each coordinate ATP. The Pros-phosphohistidine intermediate role is filled by H117.

This sequence belongs to the NDK family. In terms of assembly, homotetramer. Mg(2+) is required as a cofactor.

The protein resides in the cytoplasm. The catalysed reaction is a 2'-deoxyribonucleoside 5'-diphosphate + ATP = a 2'-deoxyribonucleoside 5'-triphosphate + ADP. The enzyme catalyses a ribonucleoside 5'-diphosphate + ATP = a ribonucleoside 5'-triphosphate + ADP. Its function is as follows. Major role in the synthesis of nucleoside triphosphates other than ATP. The ATP gamma phosphate is transferred to the NDP beta phosphate via a ping-pong mechanism, using a phosphorylated active-site intermediate. The chain is Nucleoside diphosphate kinase from Rickettsia conorii (strain ATCC VR-613 / Malish 7).